Consider the following 509-residue polypeptide: Cobyric acid synthase (509 aa).

The region spanning 262–459 is the GATase cobBQ-type domain; it reads EIKVGIIKLP…IHGIFENDIW (198 aa). The Nucleophile role is filled by cysteine 343. Histidine 451 is a catalytic residue.

The protein belongs to the CobB/CobQ family. CobQ subfamily.

It participates in cofactor biosynthesis; adenosylcobalamin biosynthesis. In terms of biological role, catalyzes amidations at positions B, D, E, and G on adenosylcobyrinic A,C-diamide. NH(2) groups are provided by glutamine, and one molecule of ATP is hydrogenolyzed for each amidation. This Prochlorococcus marinus (strain MIT 9312) protein is Cobyric acid synthase.